The chain runs to 308 residues: Protein translocase subunit SecF (308 aa).

Transmembrane regions (helical) follow at residues 10–30 (LFFA…AIFG), 129–149 (LAVS…FRGV), 160–180 (IIAM…GGVL), 181–201 (FGWQ…GFSV), 241–261 (TQLM…GITL), and 264–284 (FAII…FIAA).

This sequence belongs to the SecD/SecF family. SecF subfamily. In terms of assembly, forms a complex with SecD. Part of the essential Sec protein translocation apparatus which comprises SecA, SecYEG and auxiliary proteins SecDF. Other proteins may also be involved.

Its subcellular location is the cell membrane. Its function is as follows. Part of the Sec protein translocase complex. Interacts with the SecYEG preprotein conducting channel. SecDF uses the proton motive force (PMF) to complete protein translocation after the ATP-dependent function of SecA. The chain is Protein translocase subunit SecF from Anaerolinea thermophila (strain DSM 14523 / JCM 11388 / NBRC 100420 / UNI-1).